The sequence spans 94 residues: Small ribosomal subunit protein uS19 (94 aa).

Belongs to the universal ribosomal protein uS19 family.

Functionally, protein S19 forms a complex with S13 that binds strongly to the 16S ribosomal RNA. In Desulforudis audaxviator (strain MP104C), this protein is Small ribosomal subunit protein uS19.